The chain runs to 251 residues: Small ribosomal subunit protein uS2 (251 aa).

The protein belongs to the universal ribosomal protein uS2 family.

The polypeptide is Small ribosomal subunit protein uS2 (Novosphingobium aromaticivorans (strain ATCC 700278 / DSM 12444 / CCUG 56034 / CIP 105152 / NBRC 16084 / F199)).